The sequence spans 206 residues: Small ribosomal subunit protein uS4 (206 aa).

Residues 15-46 (MGENIWGRPKSPVNKREYGPGQHGQRRKNKLS) form a disordered region. An S4 RNA-binding domain is found at 94–154 (RRLDAIVYRA…EKSRQLALVL (61 aa)).

Belongs to the universal ribosomal protein uS4 family. Part of the 30S ribosomal subunit. Contacts protein S5. The interaction surface between S4 and S5 is involved in control of translational fidelity.

Functionally, one of the primary rRNA binding proteins, it binds directly to 16S rRNA where it nucleates assembly of the body of the 30S subunit. In terms of biological role, with S5 and S12 plays an important role in translational accuracy. The chain is Small ribosomal subunit protein uS4 from Cereibacter sphaeroides (strain ATCC 17029 / ATH 2.4.9) (Rhodobacter sphaeroides).